The sequence spans 535 residues: CTP synthase (535 aa).

The segment at 1-267 (MTKYIFVTGG…DKLVCEHMKL (267 aa)) is amidoligase domain. Residue serine 13 participates in CTP binding. UTP is bound at residue serine 13. 14 to 19 (SLGKGI) lines the ATP pocket. An L-glutamine-binding site is contributed by tyrosine 54. Aspartate 71 is a binding site for ATP. Aspartate 71 and glutamate 141 together coordinate Mg(2+). Residues 148 to 150 (DIE), 188 to 193 (KTKPTQ), and lysine 224 contribute to the CTP site. UTP is bound by residues 188–193 (KTKPTQ) and lysine 224. The region spanning 292-534 (TIGLVGKYVE…IGASVEAANQ (243 aa)) is the Glutamine amidotransferase type-1 domain. Glycine 354 contributes to the L-glutamine binding site. The Nucleophile; for glutamine hydrolysis role is filled by cysteine 381. L-glutamine-binding positions include 382–385 (LGMQ), glutamate 405, and arginine 462. Residues histidine 507 and glutamate 509 contribute to the active site.

This sequence belongs to the CTP synthase family. In terms of assembly, homotetramer. Interacts with BrxC.

It carries out the reaction UTP + L-glutamine + ATP + H2O = CTP + L-glutamate + ADP + phosphate + 2 H(+). The enzyme catalyses L-glutamine + H2O = L-glutamate + NH4(+). It catalyses the reaction UTP + NH4(+) + ATP = CTP + ADP + phosphate + 2 H(+). It participates in pyrimidine metabolism; CTP biosynthesis via de novo pathway; CTP from UDP: step 2/2. Allosterically activated by GTP, when glutamine is the substrate; GTP has no effect on the reaction when ammonia is the substrate. The allosteric effector GTP functions by stabilizing the protein conformation that binds the tetrahedral intermediate(s) formed during glutamine hydrolysis. Inhibited by the product CTP, via allosteric rather than competitive inhibition. In terms of biological role, catalyzes the ATP-dependent amination of UTP to CTP with either L-glutamine or ammonia as the source of nitrogen. Regulates intracellular CTP levels through interactions with the four ribonucleotide triphosphates. The polypeptide is CTP synthase (Bacillus subtilis (strain 168)).